The chain runs to 308 residues: Ferrochelatase (308 aa).

2 residues coordinate Fe cation: His-167 and Glu-239.

It belongs to the ferrochelatase family.

The protein resides in the cytoplasm. It carries out the reaction heme b + 2 H(+) = protoporphyrin IX + Fe(2+). Its pathway is porphyrin-containing compound metabolism; protoheme biosynthesis; protoheme from protoporphyrin-IX: step 1/1. Functionally, catalyzes the ferrous insertion into protoporphyrin IX. The polypeptide is Ferrochelatase (Thermoplasma acidophilum (strain ATCC 25905 / DSM 1728 / JCM 9062 / NBRC 15155 / AMRC-C165)).